Here is a 156-residue protein sequence, read N- to C-terminus: Nuclear cap-binding protein subunit 2 (156 aa).

Serine 2 bears the N-acetylserine mark. 2 positions are modified to phosphoserine: serine 13 and serine 18. Residues tyrosine 20, tyrosine 43, 112-116 (RTDWD), 123-127 (RQYGR), and 133-134 (QV) contribute to the mRNA site. The 79-residue stretch at 40–118 (CTLYVGNLSF…RIIRTDWDAG (79 aa)) folds into the RRM domain. Residues 124–156 (QYGRGRSGGQVRDEYRQDYDAGRGGYGKLAQNQ) form a disordered region. Over residues 134 to 144 (VRDEYRQDYDA) the composition is skewed to basic and acidic residues. Arginine 146 is modified (omega-N-methylarginine).

The protein belongs to the RRM NCBP2 family. Component of the nuclear cap-binding complex (CBC), a heterodimer composed of NCBP1/CBP80 and NCBP2/CBP20 that interacts with m7GpppG-capped RNA. Found in a U snRNA export complex with PHAX/RNUXA, NCBP1/CBP80, NCBP2/CBP20, RAN, XPO1 and m7G-capped RNA. Interacts with PHAX/RNUXA, EIF4G1, HNRNPF, HNRNPH1 and ALYREF/THOC4/ALY. Interacts with SRRT/ARS2 and KPNA3.

It localises to the nucleus. It is found in the cytoplasm. Its function is as follows. Component of the cap-binding complex (CBC), which binds co-transcriptionally to the 5' cap of pre-mRNAs and is involved in various processes such as pre-mRNA splicing, translation regulation, nonsense-mediated mRNA decay, RNA-mediated gene silencing (RNAi) by microRNAs (miRNAs) and mRNA export. The CBC complex is involved in mRNA export from the nucleus via its interaction with ALYREF/THOC4/ALY, leading to the recruitment of the mRNA export machinery to the 5' end of mRNA and to mRNA export in a 5' to 3' direction through the nuclear pore. The CBC complex is also involved in mediating U snRNA and intronless mRNAs export from the nucleus. The CBC complex is essential for a pioneer round of mRNA translation, before steady state translation when the CBC complex is replaced by cytoplasmic cap-binding protein eIF4E. The pioneer round of mRNA translation mediated by the CBC complex plays a central role in nonsense-mediated mRNA decay (NMD), NMD only taking place in mRNAs bound to the CBC complex, but not on eIF4E-bound mRNAs. The CBC complex enhances NMD in mRNAs containing at least one exon-junction complex (EJC) via its interaction with UPF1, promoting the interaction between UPF1 and UPF2. The CBC complex is also involved in 'failsafe' NMD, which is independent of the EJC complex, while it does not participate in Staufen-mediated mRNA decay (SMD). During cell proliferation, the CBC complex is also involved in microRNAs (miRNAs) biogenesis via its interaction with SRRT/ARS2, thereby being required for miRNA-mediated RNA interference. The CBC complex also acts as a negative regulator of PARN, thereby acting as an inhibitor of mRNA deadenylation. In the CBC complex, NCBP2/CBP20 recognizes and binds capped RNAs (m7GpppG-capped RNA) but requires NCBP1/CBP80 to stabilize the movement of its N-terminal loop and lock the CBC into a high affinity cap-binding state with the cap structure. The conventional cap-binding complex with NCBP2 binds both small nuclear RNA (snRNA) and messenger (mRNA) and is involved in their export from the nucleus. This is Nuclear cap-binding protein subunit 2 (NCBP2) from Bos taurus (Bovine).